Here is a 101-residue protein sequence, read N- to C-terminus: NAD(P)H-quinone oxidoreductase subunit 4L, chloroplastic (101 aa).

3 helical membrane-spanning segments follow: residues 2-22, 30-52, and 61-81; these read ILEH…YGLI, ALMC…SDFF, and IFSI…LAIV.

Belongs to the complex I subunit 4L family. As to quaternary structure, NDH is composed of at least 16 different subunits, 5 of which are encoded in the nucleus.

It is found in the plastid. The protein localises to the chloroplast thylakoid membrane. It carries out the reaction a plastoquinone + NADH + (n+1) H(+)(in) = a plastoquinol + NAD(+) + n H(+)(out). It catalyses the reaction a plastoquinone + NADPH + (n+1) H(+)(in) = a plastoquinol + NADP(+) + n H(+)(out). In terms of biological role, NDH shuttles electrons from NAD(P)H:plastoquinone, via FMN and iron-sulfur (Fe-S) centers, to quinones in the photosynthetic chain and possibly in a chloroplast respiratory chain. The immediate electron acceptor for the enzyme in this species is believed to be plastoquinone. Couples the redox reaction to proton translocation, and thus conserves the redox energy in a proton gradient. The sequence is that of NAD(P)H-quinone oxidoreductase subunit 4L, chloroplastic from Oenothera glazioviana (Large-flowered evening primrose).